We begin with the raw amino-acid sequence, 760 residues long: Heat shock transcription factor (760 aa).

Disordered stretches follow at residues 1–132 and 206–276; these read MIMN…PPVV and FHPL…GPKT. 2 stretches are compositionally biased toward polar residues: residues 19 to 31 and 38 to 88; these read TESN…SSPS and RSGT…SNKL. Residues 119 to 130 show a composition bias toward basic and acidic residues; the sequence is DYKDSIDLDKPP. The span at 221–247 shows a compositional bias: low complexity; that stretch reads AGPANNSQQQQQQQQQDSSIPSDGISS. A DNA-binding region spans residues 276–385; the sequence is TRPAFVMKIW…EDLLDKIVRN (110 aa). The involved in trimerization stretch occupies residues 414 to 467; it reads ELETIKMNQYVISEDLRRVRQDNKMLWQENYLNRERNQVQGRTLDKILKFLSVV. 4 disordered regions span residues 492 to 545, 560 to 582, 609 to 630, and 674 to 760; these read TQYR…NNNN, LTNR…EGSI, HQPG…SAPS, and QEQH…VSDH. Polar residues predominate over residues 515 to 539; that stretch reads NSRFARDNNQTAQPTYESPLSTSDT. A Phosphoserine modification is found at serine 570. A Phosphothreonine modification is found at threonine 574. The residue at position 576 (serine 576) is a Phosphoserine. Threonine 577 is modified (phosphothreonine). The segment covering 613 to 628 has biased composition (low complexity); that stretch reads ATTNNNNHSSSTAISA. A coiled-coil region spans residues 646-684; that stretch reads RNLDDLEKHINKEGQSIQQVQDWIDKLAQEQHEKQQQQQ. Composition is skewed to polar residues over residues 701-722 and 731-742; these read ATTT…NISF and PGSNVSSNINDS. Over residues 744–760 the composition is skewed to basic and acidic residues; that stretch reads GNEKKSKKRSIEEVSDH.

Belongs to the HSF family. In terms of assembly, homotrimer. Homotrimerization increases the affinity of HSF1 to DNA. Interacts with HSP90. Post-translationally, activated by phosphorylation of at least Ser-570, Thr-574, Ser-576 and Thr-577 in response to heat shock. Additional unidentified residues are also phosphorylated in response to heat shock.

The protein resides in the nucleus. DNA-binding transcription factor that specifically binds heat shock promoter elements (HSE) and activates transcription. With HSP90, is required for the modulation of the chaperone levels in response to growth temperature, rather than the activation of acute responses to sudden thermal transitions. Activated during infection and contributes to full virulence. The protein is Heat shock transcription factor of Candida albicans (strain SC5314 / ATCC MYA-2876) (Yeast).